A 337-amino-acid chain; its full sequence is UDP-3-O-acylglucosamine N-acyltransferase (337 aa).

His-238 (proton acceptor) is an active-site residue.

Belongs to the transferase hexapeptide repeat family. LpxD subfamily. As to quaternary structure, homotrimer.

The enzyme catalyses a UDP-3-O-[(3R)-3-hydroxyacyl]-alpha-D-glucosamine + a (3R)-hydroxyacyl-[ACP] = a UDP-2-N,3-O-bis[(3R)-3-hydroxyacyl]-alpha-D-glucosamine + holo-[ACP] + H(+). It functions in the pathway bacterial outer membrane biogenesis; LPS lipid A biosynthesis. Functionally, catalyzes the N-acylation of UDP-3-O-acylglucosamine using 3-hydroxyacyl-ACP as the acyl donor. Is involved in the biosynthesis of lipid A, a phosphorylated glycolipid that anchors the lipopolysaccharide to the outer membrane of the cell. This Xanthomonas oryzae pv. oryzae (strain MAFF 311018) protein is UDP-3-O-acylglucosamine N-acyltransferase.